The chain runs to 145 residues: MPKIKTSRVKYPEGWELIEPTLRDLEAKMREAENDPHDGKRKCEALWPIFRISHQKSRYIYDLYYRRKEISKELYEFCLDQGHADKNLIAKWKKPGYERLCCLRCIQTRDHNFATTCVCRVPKHLREEKVIECVHCGCRGCASGD.

This sequence belongs to the BUD31 (G10) family.

Its subcellular location is the nucleus. This chain is Protein BUD31 homolog 2, found in Oryza sativa subsp. japonica (Rice).